We begin with the raw amino-acid sequence, 524 residues long: Cytochrome P450 4F3 (524 aa).

The helical transmembrane segment at 19 to 39 threads the bilayer; the sequence is WLLLLLAGASCLLAYILTPIY. Cys468 provides a ligand contact to heme.

The protein belongs to the cytochrome P450 family. Heme serves as cofactor. Highest level in polymorphonuclear leukocytes and dendritic cells. Detectable in lymph nodes, spleen, bone marrow and peripheral blood. Highly expressed in ovary. Very low level in liver, kidney, and smooth muscle. Expressed in neutrophils (at protein level).

Its subcellular location is the endoplasmic reticulum membrane. The protein localises to the microsome membrane. It catalyses the reaction leukotriene B4 + reduced [NADPH--hemoprotein reductase] + O2 = 18-hydroxy-leukotriene B4 + oxidized [NADPH--hemoprotein reductase] + H2O + H(+). It carries out the reaction leukotriene B4 + reduced [NADPH--hemoprotein reductase] + O2 = 19-hydroxy-leukotriene B4 + oxidized [NADPH--hemoprotein reductase] + H2O + H(+). It participates in lipid metabolism; leukotriene B4 degradation. A cytochrome P450 monooxygenase involved in the metabolism of the pro-inflammatory lipid mediator leukotriene B4 (LTB4). Hydroxylates at the omega-1 and omega-2 positions LTB4. This oxidation step leads to LTB4 inactivation, which is postulated to be a crucial part of the resolution of inflammation. Mechanistically, uses molecular oxygen inserting one oxygen atom into a substrate, and reducing the second into a water molecule, with two electrons provided by NADPH via cytochrome P450 reductase (CPR; NADPH-ferrihemoprotein reductase). This is Cytochrome P450 4F3 from Mus musculus (Mouse).